We begin with the raw amino-acid sequence, 273 residues long: Dermonecrotic toxin LspaSicTox-alphaIA2iii (273 aa).

The active site involves H5. The Mg(2+) site is built by E25 and D27. Residue H41 is the Nucleophile of the active site. 2 cysteine pairs are disulfide-bonded: C45/C51 and C47/C190. A Mg(2+)-binding site is contributed by D85.

It belongs to the arthropod phospholipase D family. Class II subfamily. Requires Mg(2+) as cofactor. Expressed by the venom gland.

The protein localises to the secreted. The enzyme catalyses an N-(acyl)-sphingosylphosphocholine = an N-(acyl)-sphingosyl-1,3-cyclic phosphate + choline. It catalyses the reaction an N-(acyl)-sphingosylphosphoethanolamine = an N-(acyl)-sphingosyl-1,3-cyclic phosphate + ethanolamine. The catalysed reaction is a 1-acyl-sn-glycero-3-phosphocholine = a 1-acyl-sn-glycero-2,3-cyclic phosphate + choline. It carries out the reaction a 1-acyl-sn-glycero-3-phosphoethanolamine = a 1-acyl-sn-glycero-2,3-cyclic phosphate + ethanolamine. Its function is as follows. Dermonecrotic toxins cleave the phosphodiester linkage between the phosphate and headgroup of certain phospholipids (sphingolipid and lysolipid substrates), forming an alcohol (often choline) and a cyclic phosphate. This toxin acts on sphingomyelin (SM). It may also act on ceramide phosphoethanolamine (CPE), lysophosphatidylcholine (LPC) and lysophosphatidylethanolamine (LPE), but not on lysophosphatidylserine (LPS), and lysophosphatidylglycerol (LPG). It acts by transphosphatidylation, releasing exclusively cyclic phosphate products as second products. Induces dermonecrosis, hemolysis, increased vascular permeability, edema, inflammatory response, and platelet aggregation. This Loxosceles spadicea (Recluse spider) protein is Dermonecrotic toxin LspaSicTox-alphaIA2iii.